We begin with the raw amino-acid sequence, 303 residues long: Vacuolar protein sorting-associated protein 26B (303 aa).

Belongs to the VPS26 family. In terms of assembly, component of the retromer complex which consists of VPS29 (MAG1), VPS26 (VPS26A or VPS26B), VPS35 (VPS35A or VPS35B or VPS35C), VPS5/17 (SNX1 or SNX2A or SNX2B). Component of a retromer subcomplex consisting of VPS29 (MAG1), VPS26 (VPS26A or VPS26B), VPS35 (VPS35A or VPS35B or VPS35C).

It is found in the cytoplasm. The protein resides in the endosome membrane. Its subcellular location is the prevacuolar compartment membrane. It localises to the golgi apparatus. The protein localises to the trans-Golgi network membrane. In terms of biological role, plays a role in vesicular protein sorting. Component of the membrane-associated retromer complex which is essential in endosome-to-Golgi retrograde transport. The VPS29-VPS26-VPS35 subcomplex may be involved in recycling of specific cargos from endosome to the plasma membrane. In Arabidopsis thaliana (Mouse-ear cress), this protein is Vacuolar protein sorting-associated protein 26B (VPS26B).